Consider the following 136-residue polypeptide: Small ribosomal subunit protein uS11 (136 aa).

Disordered stretches follow at residues M1–N20 and V115–R136. A compositionally biased stretch (basic residues) spans P125–R136.

It belongs to the universal ribosomal protein uS11 family. Part of the 30S ribosomal subunit. Interacts with proteins S7 and S18. Binds to IF-3.

Its function is as follows. Located on the platform of the 30S subunit, it bridges several disparate RNA helices of the 16S rRNA. Forms part of the Shine-Dalgarno cleft in the 70S ribosome. This chain is Small ribosomal subunit protein uS11, found in Mycoplasmopsis pulmonis (strain UAB CTIP) (Mycoplasma pulmonis).